A 562-amino-acid polypeptide reads, in one-letter code: Phosphoenolpyruvate carboxykinase (ATP) (562 aa).

265 to 272 is a binding site for ATP; that stretch reads GLSGTGKT.

This sequence belongs to the phosphoenolpyruvate carboxykinase (ATP) family.

The catalysed reaction is oxaloacetate + ATP = phosphoenolpyruvate + ADP + CO2. It functions in the pathway carbohydrate biosynthesis; gluconeogenesis. The chain is Phosphoenolpyruvate carboxykinase (ATP) (pckA) from Dictyostelium discoideum (Social amoeba).